The sequence spans 260 residues: Carbonic anhydrase 2 (260 aa).

Ser2 carries the N-acetylserine modification. At Ser2 the chain carries Phosphoserine. Residues 3–259 (HHWGYSKHNG…LKNRKIKASF (257 aa)) enclose the Alpha-carbonic anhydrase domain. Residue His64 is the Proton acceptor of the active site. The active site involves Asn67. Residue Ser87 is modified to Phosphoserine. Residues His94, His96, and His119 each contribute to the Zn(2+) site. Tyr127 is an active-site residue. Ser165 bears the Phosphoserine mark. Residue 198–199 (TT) participates in substrate binding.

Belongs to the alpha-carbonic anhydrase family. As to quaternary structure, interacts with SLC4A4. Interaction with SLC4A7 regulates SLC4A7 transporter activity. Interacts with SLC26A6. Zn(2+) serves as cofactor.

Its subcellular location is the cytoplasm. It is found in the cell membrane. It carries out the reaction hydrogencarbonate + H(+) = CO2 + H2O. The enzyme catalyses urea = cyanamide + H2O. With respect to regulation, inhibited by acetazolamide. In terms of biological role, catalyzes the reversible hydration of carbon dioxide. Can also hydrate cyanamide to urea. Involved in the regulation of fluid secretion into the anterior chamber of the eye. Essential for bone resorption and osteoclast differentiation. Contributes to intracellular pH regulation in the duodenal upper villous epithelium during proton-coupled peptide absorption. Stimulates the chloride-bicarbonate exchange activity of SLC26A6. This chain is Carbonic anhydrase 2 (Ca2), found in Mus musculus (Mouse).